Here is a 492-residue protein sequence, read N- to C-terminus: 3-ketoacyl-CoA synthase 5 (492 aa).

The next 2 helical transmembrane spans lie at 20–40 (LINN…AIEL) and 59–79 (LLHI…YFMS). Residues 76–365 (YFMSKPRTVY…FLSSLIGRKI (290 aa)) form the FAE domain. Residues Cys-220, His-299, His-383, His-387, His-416, and Asn-420 contribute to the active site.

The protein belongs to the thiolase-like superfamily. Chalcone/stilbene synthases family. In terms of tissue distribution, expressed in siliques, flowers, leaves and seedlings.

The protein localises to the membrane. It catalyses the reaction a very-long-chain acyl-CoA + malonyl-CoA + H(+) = a very-long-chain 3-oxoacyl-CoA + CO2 + CoA. The protein operates within lipid metabolism; fatty acid biosynthesis. Inhibited by K3 herbicides such as alachlor, allidochlor, anilofos, cafenstrole and flufenacet. Strongly inhibited by metazachlor and mefluidide. In terms of biological role, mediates mostly the synthesis of VLCFAs from 26 to 30 carbons in length (e.g. C20:1, C26, C28, C30). This is 3-ketoacyl-CoA synthase 5 from Arabidopsis thaliana (Mouse-ear cress).